The chain runs to 171 residues: Serine acetyltransferase (171 aa).

This sequence belongs to the transferase hexapeptide repeat family.

It is found in the cytoplasm. The catalysed reaction is L-serine + acetyl-CoA = O-acetyl-L-serine + CoA. It participates in amino-acid biosynthesis; L-cysteine biosynthesis; L-cysteine from L-serine: step 1/2. This Helicobacter pylori (strain J99 / ATCC 700824) (Campylobacter pylori J99) protein is Serine acetyltransferase (cysE).